We begin with the raw amino-acid sequence, 274 residues long: Triosephosphate isomerase (274 aa).

Residue 31–33 (NWK) coordinates substrate. Histidine 118 acts as the Electrophile in catalysis. Glutamate 188 (proton acceptor) is an active-site residue. Substrate-binding positions include glycine 194, serine 234, and 255 to 256 (GG).

This sequence belongs to the triosephosphate isomerase family. As to quaternary structure, homodimer.

It is found in the cytoplasm. The catalysed reaction is D-glyceraldehyde 3-phosphate = dihydroxyacetone phosphate. The protein operates within carbohydrate biosynthesis; gluconeogenesis. It participates in carbohydrate degradation; glycolysis; D-glyceraldehyde 3-phosphate from glycerone phosphate: step 1/1. Involved in the gluconeogenesis. Catalyzes stereospecifically the conversion of dihydroxyacetone phosphate (DHAP) to D-glyceraldehyde-3-phosphate (G3P). The sequence is that of Triosephosphate isomerase from Chlamydia trachomatis serovar D (strain ATCC VR-885 / DSM 19411 / UW-3/Cx).